Reading from the N-terminus, the 1031-residue chain is Toll-like receptor 9 (1031 aa).

The signal sequence occupies residues 1-25 (MGPCHGALQPLSLLVQAAMLAVALA). Residues 26-817 (QGTLPPFLPC…LCLDESLSWD (792 aa)) lie on the Extracellular side of the membrane. A disulfide bridge links Cys-35 with Cys-45. A DNA-binding site is contributed by 47 to 51 (WLFLK). LRR repeat units lie at residues 62–85 (RDNVTSLSLLSNRIHHLHDSDFAQ), 87–110 (SNLQKLNLKWNCPPAGLSPMHFPC), 122–147 (VPTLEELNLSYNGITTVPALPSSLVS), 150–166 (LSRTNILQLDPTSLTGL), 167–190 (HALRFLYMDGNCYYKNPCGRALEV), 198–221 (LGNLTHLSLKYNNLTTVPRSLPPS), 223–242 (EYLLLSYNHIVTLAPEDLAN), 243–268 (LTALRVLDVGGNCRRCDHARNPCVEC), 283–306 (LSRLEGLVLKDSSLYQLNPRWFRG), 308–332 (GNLTVLDLSENFLYDCITKTKAFQG), 333–356 (LAQLRRLNLSFNYHKKVSFAHLTL), 363–386 (LLSLQELDMHGIFFRSLSQKTLQP), 390–413 (LPMLQRLYLQMNFINQAQLGIFKD), 414–438 (FPGLRYIDLSDNRISGAVEPVATTG), 470–494 (CKNLSFTLDLSRNNLVTVQPEMFAQ), 496–519 (SRLQCLRLSHNSISQAVNGSQFVP), 520–543 (LTSLQVLDLSHNKLDLYHGRSFTE), 545–567 (PRLEALDLSYNSQPFSMRGVGHN), 574–598 (LPTLRYLSLAHNGIHSRVSQQLCST), 600–622 (LWALDFSGNSLSQMWAEGDLYLR), 627–650 (LRSLIRLDLSQNRLHTLLPCTLGN), 652–675 (PKSLQLLRLRNNYLAFFNWSSLTL), 676–699 (LPNLETLDLAGNQLKALSNGSLPS), 701–723 (TQLQRLDVSRNSIIFVVPGFFAL), 724–747 (ATRLRELNLSANALRTVEPSWFGF), and 749–772 (AGSLEVLDVSANPLHCACGAAFVD). The N-linked (GlcNAc...) asparagine glycan is linked to Asn-64. DNA is bound by residues 72-77 (SNRIHH) and 95-109 (KWNCPPAGLSPMHFP). Cys-98 and Cys-110 form a disulfide bridge. Asn-129 carries N-linked (GlcNAc...) asparagine glycosylation. DNA is bound by residues Tyr-132, Arg-152, and 179–181 (YYK). A disulfide bridge links Cys-178 with Cys-184. Asn-200 carries N-linked (GlcNAc...) asparagine glycosylation. Tyr-208 contacts DNA. N-linked (GlcNAc...) asparagine glycosylation is found at Asn-210 and Asn-242. Intrachain disulfides connect Cys-255-Cys-268 and Cys-258-Cys-265. The S-palmitoyl cysteine moiety is linked to residue Cys-258. Arg-262 is a DNA binding site. Cys-265 carries S-palmitoyl cysteine lipidation. N-linked (GlcNAc...) asparagine glycans are attached at residues Asn-309 and Asn-340. A disulfide bridge connects residues Cys-470 and Cys-500. N-linked (GlcNAc...) asparagine glycans are attached at residues Asn-472 and Asn-513. Residue Asn-567 is glycosylated (N-linked (GlcNAc...) asparagine). N-linked (GlcNAc...) asparagine glycans are attached at residues Asn-669 and Asn-694. Asn-731 is a glycosylation site (N-linked (GlcNAc...) asparagine). 2 disulfide bridges follow: Cys-764-Cys-790 and Cys-766-Cys-809. The chain crosses the membrane as a helical span at residues 818-838 (CFGLSLLVVALGLAMPMLHHL). The Cytoplasmic segment spans residues 839-1031 (CGWDLWYCFH…NFCRGPTMAE (193 aa)). Residues 866–1011 (LSYDAFVVFD…SFWAQLGMAL (146 aa)) form the TIR domain.

Belongs to the Toll-like receptor family. As to quaternary structure, monomer and homodimer. Exists as a monomer in the absence of unmethylated cytidine-phosphate-guanosine (CpG) ligand. Proteolytic processing of an insertion loop (Z-loop) is required for homodimerization upon binding to the unmethylated CpG ligand leading to its activation. Interacts with MYD88 via their respective TIR domains. Interacts with BTK. Interacts (via transmembrane domain) with UNC93B1. Interacts with CD300LH; the interaction may promote full activation of TLR9-triggered innate responses. Interacts with CNPY3 and HSP90B1; this interaction is required for proper folding in the endoplasmic reticulum. Interacts with SMPDL3B. Interacts with CD82; this interaction is essential for TLR9-dependent myddosome formation in response to CpG stimulation. In terms of processing, activated by proteolytic cleavage of the flexible loop between repeats LRR14 and LRR15 within the ectodomain. Cleavage requires UNC93B1. Proteolytically processed by first removing the majority of the ectodomain by either asparagine endopeptidase (AEP) or a cathepsin followed by a trimming event that is solely cathepsin mediated and required for optimal receptor signaling. Post-translationally, palmitoylated by ZDHHC3 in the Golgi regulates TLR9 trafficking from the Golgi to endosomes. Depalmitoylation by PPT1 controls the release of TLR9 from UNC93B1 in endosomes. In terms of tissue distribution, expressed in airway epithelium, vascular endothelium and inflammatory cells in blood vessels of the lungs (at protein level). Highly expressed in pulmonary intravascular macrophages (PIMs) and to a lesser extent in alveolar macrophages, neutrophiles, type-II alveolar epithelial cells and bronchial epithelial cells of the lungs (at protein level). High constitutive intracellular expression in leukocytes including polymorphonuclear leukocytes (PMNs), CD4 and CD8 T cells (at protein level). Expressed throughout the respiratory tract including larynx, upper, middle and lower trachea, and bronchus in isolated equine respiratory epithelial cells (ERECs) and in fully differentiated ERECs cultured at the air-fluid interface (AFI) (at protein level). Constitutively expressed in peripheral blood mononuclear cells (PBMCs), lymph nodes and spleen. The level of expression in PBMCs is about 2- to 3-fold higher than that in lymph nodes and spleen. Very low expression in liver, heart, lung, kidney, small intestine, colon and stomach. Low expression in the airway tissue epithelium of the larynx, upper trachea, middle tranchea, lower trachea, bronchus and spleen, and more abundant expression in mesenteric lymph node. Not expressed in fully differentiated bronchus epithelial cells cultured at the AFI for four weeks. Expressed in gingival tissue.

It is found in the endoplasmic reticulum membrane. The protein resides in the endosome. The protein localises to the lysosome. Its subcellular location is the cytoplasmic vesicle. It localises to the phagosome. It is found in the cell membrane. The protein resides in the cytoplasm. The protein localises to the nucleus. Functionally, key component of innate and adaptive immunity. TLRs (Toll-like receptors) control host immune response against pathogens through recognition of molecular patterns specific to microorganisms. TLR9 is a nucleotide-sensing TLR which is activated by unmethylated cytidine-phosphate-guanosine (CpG) dinucleotides. Acts via MYD88 and TRAF6, leading to NF-kappa-B activation, cytokine secretion and the inflammatory response. Upon CpG stimulation, induces B-cell proliferation, activation, survival and antibody production. The chain is Toll-like receptor 9 from Equus caballus (Horse).